We begin with the raw amino-acid sequence, 221 residues long: Ribosomal RNA small subunit methyltransferase G (221 aa).

S-adenosyl-L-methionine is bound by residues Gly-85, Phe-90, 136–137, and Arg-149; that span reads AE.

The protein belongs to the methyltransferase superfamily. RNA methyltransferase RsmG family.

Its subcellular location is the cytoplasm. In terms of biological role, specifically methylates the N7 position of a guanine in 16S rRNA. The protein is Ribosomal RNA small subunit methyltransferase G of Porphyromonas gingivalis (strain ATCC BAA-308 / W83).